The chain runs to 253 residues: Aminoglycoside nucleotidyltransferase (4') (253 aa).

Homodimer.

The catalysed reaction is kanamycin A + ATP = 4'-adenylylkanamycin A + diphosphate. The enzyme catalyses amikacin + ATP = 4'-adenylylamikacin + diphosphate. It catalyses the reaction neomycin B + ATP = 4'-adenylylneomycin B + diphosphate. It carries out the reaction paromomycin + ATP = 4'-adenylylparomomycin + diphosphate. The catalysed reaction is ribostamycin + ATP = 4'-adenylylribostamycin + diphosphate. The enzyme catalyses tobramycin + ATP = 4'-adenylyltobramycin + diphosphate. It catalyses the reaction kanamycin A + CTP = 4'-cytidylylkanamycin A + diphosphate. It carries out the reaction kanamycin A + GTP = 4'-guanylylkanamycin A + diphosphate. The catalysed reaction is kanamycin A + ITP = 4'-inosinylylkanamycin A + diphosphate. The enzyme catalyses dTTP + kanamycin A = 4'-thymidylylkanamycin A + diphosphate. It catalyses the reaction kanamycin A + UTP = 4'-uridylylkanamycin A + diphosphate. It carries out the reaction kanamycin A + dATP = 4'-(2'-deoxyadenylyl)kanamycin A + diphosphate. The catalysed reaction is kanamycin A + dCTP = 4'-(2'-deoxycytidylyl)kanamycin A + diphosphate. The enzyme catalyses kanamycin A + dGTP = 4'-(2'-deoxyguanylyl)kanamycin A + diphosphate. It catalyses the reaction dUTP + kanamycin A = 4'-(2'-deoxyuridylyl)kanamycin A + diphosphate. It carries out the reaction amikacin + GTP = 4'-guanylylamikacin + diphosphate. The catalysed reaction is amikacin + ITP = 4'-inosinylylamikacin + diphosphate. The enzyme catalyses amikacin + CTP = 4'-cytidylylamikacin + diphosphate. It catalyses the reaction amikacin + UTP = 4'-uridylylamikacin + diphosphate. It carries out the reaction amikacin + dTTP = 4'-thymidylylamikacin + diphosphate. Functionally, inactivates aminoglycoside antibiotics such as kanamycin by catalyzing the transfer of a nucleotidyl group from nucleoside triphosphates such as (d)ATP to the 4'-hydroxyl group of the aminoglycoside. The sequence is that of Aminoglycoside nucleotidyltransferase (4') from Bacillus sp.